The sequence spans 434 residues: Eukaryotic translation initiation factor 3 subunit E (434 aa).

A PCI domain is found at 219-392 (FFNHPKGRDL…GHVVMGTQPL (174 aa)).

This sequence belongs to the eIF-3 subunit E family. In terms of assembly, component of the eukaryotic translation initiation factor 3 (eIF-3) complex. The eIF-3 complex interacts with pix. Interacts with mxt.

It localises to the cytoplasm. Its function is as follows. Component of the eukaryotic translation initiation factor 3 (eIF-3) complex, which is involved in protein synthesis of a specialized repertoire of mRNAs and, together with other initiation factors, stimulates binding of mRNA and methionyl-tRNAi to the 40S ribosome. The eIF-3 complex specifically targets and initiates translation of a subset of mRNAs involved in cell proliferation. The chain is Eukaryotic translation initiation factor 3 subunit E (eIF3-S6) from Drosophila grimshawi (Hawaiian fruit fly).